A 246-amino-acid chain; its full sequence is Sugar fermentation stimulation protein homolog (246 aa).

It belongs to the SfsA family.

The polypeptide is Sugar fermentation stimulation protein homolog (Prochlorococcus marinus (strain MIT 9215)).